Consider the following 469-residue polypeptide: Repressible acid phosphatase (469 aa).

The signal sequence occupies residues 1 to 16; that stretch reads MLSILLSLLSLSGTHA. N-linked (GlcNAc...) asparagine glycans are attached at residues Asn-23 and Asn-31. Residue His-77 is the Nucleophile of the active site. N-linked (GlcNAc...) asparagine glycosylation is found at Asn-129, Asn-201, Asn-229, Asn-250, and Asn-317. The active-site Proton donor is Asp-340. Residues Asn-392 and Asn-447 are each glycosylated (N-linked (GlcNAc...) asparagine).

The protein belongs to the histidine acid phosphatase family. In terms of processing, glycosylated during secretion across the membrane.

It is found in the secreted. It carries out the reaction a phosphate monoester + H2O = an alcohol + phosphate. The polypeptide is Repressible acid phosphatase (PHO5) (Kluyveromyces lactis (strain ATCC 8585 / CBS 2359 / DSM 70799 / NBRC 1267 / NRRL Y-1140 / WM37) (Yeast)).